A 264-amino-acid chain; its full sequence is Orotidine 5'-phosphate decarboxylase (264 aa).

Substrate contacts are provided by residues aspartate 37, 59–61 (KTH), 91–100 (DRKFADIGNT), tyrosine 217, and arginine 235. Lysine 93 functions as the Proton donor in the catalytic mechanism.

This sequence belongs to the OMP decarboxylase family.

It catalyses the reaction orotidine 5'-phosphate + H(+) = UMP + CO2. It functions in the pathway pyrimidine metabolism; UMP biosynthesis via de novo pathway; UMP from orotate: step 2/2. This Torulaspora delbrueckii (Yeast) protein is Orotidine 5'-phosphate decarboxylase (URA3).